A 478-amino-acid chain; its full sequence is Ribosomal RNA small subunit methyltransferase F (478 aa).

S-adenosyl-L-methionine contacts are provided by residues Ala-125–Lys-131, Glu-149, Asp-176, and Asp-194. Catalysis depends on Cys-247, which acts as the Nucleophile.

It belongs to the class I-like SAM-binding methyltransferase superfamily. RsmB/NOP family.

Its subcellular location is the cytoplasm. It carries out the reaction cytidine(1407) in 16S rRNA + S-adenosyl-L-methionine = 5-methylcytidine(1407) in 16S rRNA + S-adenosyl-L-homocysteine + H(+). Functionally, specifically methylates the cytosine at position 1407 (m5C1407) of 16S rRNA. In Serratia proteamaculans (strain 568), this protein is Ribosomal RNA small subunit methyltransferase F.